Consider the following 291-residue polypeptide: tRNA U34 carboxymethyltransferase (291 aa).

Carboxy-S-adenosyl-L-methionine contacts are provided by residues K61, W75, K80, G100, 122–124 (DPS), 149–150 (VE), Y169, and R284.

It belongs to the class I-like SAM-binding methyltransferase superfamily. CmoB family. As to quaternary structure, homotetramer.

It catalyses the reaction carboxy-S-adenosyl-L-methionine + 5-hydroxyuridine(34) in tRNA = 5-carboxymethoxyuridine(34) in tRNA + S-adenosyl-L-homocysteine + H(+). In terms of biological role, catalyzes carboxymethyl transfer from carboxy-S-adenosyl-L-methionine (Cx-SAM) to 5-hydroxyuridine (ho5U) to form 5-carboxymethoxyuridine (cmo5U) at position 34 in tRNAs. This is tRNA U34 carboxymethyltransferase from Campylobacter jejuni subsp. jejuni serotype O:23/36 (strain 81-176).